The following is a 164-amino-acid chain: DNA-directed RNA polymerase 19 kDa subunit (164 aa).

Residues 1-35 (MADTDDIIDYESDDLTEYEDDEEEEEDGESLETSD) show a composition bias toward acidic residues. Residues 1–39 (MADTDDIIDYESDDLTEYEDDEEEEEDGESLETSDIDPK) are disordered.

Belongs to the poxviridae DNA-directed RNA polymerase 19 kDa subunit family. The DNA-dependent RNA polymerase used for intermediate and late genes expression consists of eight subunits Rpo30/OPG66, Rpo7/OPG90, Rpo22/OPG103, Rpo147/OPG105, Rpo18/OPG119, Rpo19/OPG131, Rpo132/OPG151 and Rpo35/OPG156. The same holoenzyme, with the addition of the transcription-specificity factor OPG109, is used for early gene expression.

It is found in the virion. It carries out the reaction RNA(n) + a ribonucleoside 5'-triphosphate = RNA(n+1) + diphosphate. In terms of biological role, part of the DNA-dependent RNA polymerase which catalyzes the transcription of viral DNA into RNA using the four ribonucleoside triphosphates as substrates. Responsible for the transcription of early, intermediate and late genes. DNA-dependent RNA polymerase associates with the early transcription factor (ETF), itself composed of OPG118 and OPG133, thereby allowing the early genes transcription. Late transcription, and probably also intermediate transcription, require newly synthesized RNA polymerase. This chain is DNA-directed RNA polymerase 19 kDa subunit (OPG131), found in Homo sapiens (Human).